Reading from the N-terminus, the 341-residue chain is S-adenosylmethionine:tRNA ribosyltransferase-isomerase (341 aa).

Belongs to the QueA family. As to quaternary structure, monomer.

It localises to the cytoplasm. The enzyme catalyses 7-aminomethyl-7-carbaguanosine(34) in tRNA + S-adenosyl-L-methionine = epoxyqueuosine(34) in tRNA + adenine + L-methionine + 2 H(+). The protein operates within tRNA modification; tRNA-queuosine biosynthesis. In terms of biological role, transfers and isomerizes the ribose moiety from AdoMet to the 7-aminomethyl group of 7-deazaguanine (preQ1-tRNA) to give epoxyqueuosine (oQ-tRNA). This Acetivibrio thermocellus (strain ATCC 27405 / DSM 1237 / JCM 9322 / NBRC 103400 / NCIMB 10682 / NRRL B-4536 / VPI 7372) (Clostridium thermocellum) protein is S-adenosylmethionine:tRNA ribosyltransferase-isomerase.